The sequence spans 638 residues: 1-deoxy-D-xylulose-5-phosphate synthase (638 aa).

Thiamine diphosphate is bound by residues His71 and 112 to 114; that span reads SHA. Asp144 provides a ligand contact to Mg(2+). Thiamine diphosphate contacts are provided by residues 145 to 146, Asn173, Tyr284, and Glu365; that span reads GA. Asn173 is a Mg(2+) binding site.

The protein belongs to the transketolase family. DXPS subfamily. In terms of assembly, homodimer. The cofactor is Mg(2+). Thiamine diphosphate serves as cofactor.

The catalysed reaction is D-glyceraldehyde 3-phosphate + pyruvate + H(+) = 1-deoxy-D-xylulose 5-phosphate + CO2. It participates in metabolic intermediate biosynthesis; 1-deoxy-D-xylulose 5-phosphate biosynthesis; 1-deoxy-D-xylulose 5-phosphate from D-glyceraldehyde 3-phosphate and pyruvate: step 1/1. Functionally, catalyzes the acyloin condensation reaction between C atoms 2 and 3 of pyruvate and glyceraldehyde 3-phosphate to yield 1-deoxy-D-xylulose-5-phosphate (DXP). The sequence is that of 1-deoxy-D-xylulose-5-phosphate synthase from Mycobacterium sp. (strain JLS).